Reading from the N-terminus, the 287-residue chain is mRNA-capping enzyme regulatory subunit OPG124 (287 aa).

It belongs to the orthopoxvirus mRNA-capping enzyme regulatory subunit family. Interacts with the catalytic subunit OPG113.

It is found in the virion. Its function is as follows. Regulatory subunit of the mRNA cap enzyme which stabilizes the catalytic subunit and enhances its methyltransferase activity through an allosteric mechanism. Heterodimeric mRNA capping enzyme catalyzes the linkage of a N7-methyl-guanosine moiety to the first transcribed nucleotide (cap 0 structure), whereas the methyltransferase OPG102 is responsible for a second methylation at the 2'-O position of the ribose (cap 1 structure). Also involved in early viral gene transcription termination and intermediate viral gene transcription initiation. Early gene transcription termination requires the termination factor VTF, the DNA-dependent ATPase NPH-I/OPG123 and the RAP94/OPG109 subunit of the viral RNA polymerase, as well as the presence of a specific termination motif. Binds, together with RAP94/OPG109, to the termination motif 5'-UUUUUNU-3' in the nascent early mRNA. In Bos taurus (Bovine), this protein is mRNA-capping enzyme regulatory subunit OPG124 (OPG124).